We begin with the raw amino-acid sequence, 348 residues long: Rhodopsin (348 aa).

Met1 is modified (N-acetylmethionine). Over 1 to 36 the chain is Extracellular; it reads MNGTEGPNFYVPFSNKTGVVRSPFEYPQYYLAEPWQ. Asn2 and Asn15 each carry an N-linked (GlcNAc...) asparagine glycan. The chain crosses the membrane as a helical span at residues 37 to 61; it reads FSMLAAYMFLLIVLGFPINFLTLYV. Over 62 to 73 the chain is Cytoplasmic; sequence TVQHKKLRTPLN. Residues 74-96 traverse the membrane as a helical segment; sequence YILLNLAVADLFMVFGGFTTTLY. The Extracellular segment spans residues 97–110; it reads TSLHGYFVFGPTGC. Cys110 and Cys187 form a disulfide bridge. Residues 111–133 traverse the membrane as a helical segment; the sequence is NLEGFFATLGGEIALWSLVVLAI. The short motif at 134 to 136 is the 'Ionic lock' involved in activated form stabilization element; that stretch reads ERY. Over 134–152 the chain is Cytoplasmic; that stretch reads ERYVVVCKPMSNFRFGENH. A helical transmembrane segment spans residues 153 to 173; it reads AIMGVGLTWVMALACAAPPLV. The Extracellular portion of the chain corresponds to 174–202; sequence GWSRYIPEGMQCSCGIDYYTLKPEVNNES. Glu201 is a Zn(2+) binding site. A helical membrane pass occupies residues 203–224; it reads FVIYMFVVHFTIPMIVIFFCYG. Residues 225–252 lie on the Cytoplasmic side of the membrane; the sequence is QLVFTVKEAAAQQQESATTQKAEKEVTR. The chain crosses the membrane as a helical span at residues 253–274; sequence MVIIMVIAFLICWVPYASVAFY. Over 275–286 the chain is Extracellular; it reads IFTHQGFNFGPI. Gln279 is a binding site for Zn(2+). The chain crosses the membrane as a helical span at residues 287 to 308; the sequence is FMTLPAFFAKAAAIYNPVIYIM. Lys296 carries the N6-(retinylidene)lysine modification. Residues 309–348 are Cytoplasmic-facing; it reads MNKQFRTCMITTLCCGKNPLGDDEVSASASKTETSQVAPA. Residues Cys322 and Cys323 are each lipidated (S-palmitoyl cysteine). The interval 330 to 348 is interaction with SAG; sequence DDEVSASASKTETSQVAPA. Phosphoserine is present on residues Ser334 and Ser338. Thr340 and Thr342 each carry phosphothreonine. The residue at position 343 (Ser343) is a Phosphoserine.

This sequence belongs to the G-protein coupled receptor 1 family. Opsin subfamily. In terms of assembly, homodimer. Interacts (phosphorylated form) with SAG. Interacts with GNAT1. Interacts with GNAT3. SAG and G-proteins compete for a common binding site. Interacts with GRK1. Interacts with PRCD; the interaction promotes PRCD stability. Forms a complex with ASAP1 and ARF4. Forms a complex with ASAP1, RAB11A, Rabin8/RAB3IP, ARF4 and RAB11FIP3; the complex regulates Golgi-to-cilia rhodopsin/RHO transport in photoreceptors. Post-translationally, phosphorylated on some or all of the serine and threonine residues present in the C-terminal region. Contains one covalently linked retinal chromophore. Upon light absorption, the covalently bound 11-cis-retinal is converted to all-trans-retinal. After hydrolysis of the Schiff base and release of the covalently bound all-trans-retinal, active rhodopsin is regenerated by binding of a fresh molecule of 11-cis-retinal.

The protein resides in the membrane. It is found in the cell projection. The protein localises to the cilium. Its subcellular location is the photoreceptor outer segment. Its function is as follows. Photoreceptor required for image-forming vision at low light intensity. Required for photoreceptor cell viability after birth. Light-induced isomerization of 11-cis to all-trans retinal triggers a conformational change that activates signaling via G-proteins. Subsequent receptor phosphorylation mediates displacement of the bound G-protein alpha subunit by the arrestin SAG and terminates signaling. The protein is Rhodopsin (RHO) of Pagophilus groenlandicus (Harp seal).